Here is a 234-residue protein sequence, read N- to C-terminus: Purine nucleoside phosphorylase DeoD-type (234 aa).

Histidine 5 is a binding site for a purine D-ribonucleoside. Phosphate is bound by residues glycine 21, arginine 25, arginine 44, and arginine 88–threonine 91. A purine D-ribonucleoside is bound by residues glutamate 178–glutamate 180 and serine 202–aspartate 203. Aspartate 203 (proton donor) is an active-site residue.

The protein belongs to the PNP/UDP phosphorylase family. As to quaternary structure, homohexamer; trimer of homodimers.

It catalyses the reaction a purine D-ribonucleoside + phosphate = a purine nucleobase + alpha-D-ribose 1-phosphate. The enzyme catalyses a purine 2'-deoxy-D-ribonucleoside + phosphate = a purine nucleobase + 2-deoxy-alpha-D-ribose 1-phosphate. In terms of biological role, catalyzes the reversible phosphorolytic breakdown of the N-glycosidic bond in the beta-(deoxy)ribonucleoside molecules, with the formation of the corresponding free purine bases and pentose-1-phosphate. This Lactococcus lactis subsp. lactis (strain IL1403) (Streptococcus lactis) protein is Purine nucleoside phosphorylase DeoD-type.